The sequence spans 749 residues: Signal transducer and activator of transcription 4 (749 aa).

The SH2 domain occupies 570-665 (WIDGYIMGFV…ENPLKYLYPD (96 aa)). K668 carries the N6-acetyllysine modification. Y694 is modified (phosphotyrosine; by JAK). S722 carries the post-translational modification Phosphoserine.

This sequence belongs to the transcription factor STAT family. Forms a homodimer or a heterodimer with a related family member. Interacts with ARL2BP. Interacts with STAT1. Interacts with JUN; this complex efficiently interacts with the AP-1-related sequence of the IFN-gamma promoter. Acetylation at Lys-668 is required for JAK2-mediated phosphorylation and activation of STAT4. Post-translationally, tyrosine phosphorylated upon IL12 and IFN-alpha activation, but not by IFN-gamma in T-lymphocytes and NK cells. Serine phosphorylation is required for maximal transcriptional activity but not for DNA binding. Phosphorylation by MAP2K6 at Ser-722 is required for full transcriptional activity induced by IL12. However this serine phosphorylation is not required for cell proliferation although critical for IFN-gamma production. Expression is restricted to testis, thymus, and spleen.

The protein resides in the cytoplasm. It localises to the nucleus. Functionally, transcriptional regulator mainly expressed in hematopoietic cells that plays a critical role in cellular growth, differentiation and immune response. Plays a key role in the differentiation of T-helper 1 cells and the production of interferon-gamma. Also participates in multiple neutrophil functions including chemotaxis and production of the neutrophil extracellular traps. After IL12 binding to its receptor IL12RB2, STAT4 interacts with the intracellular domain of IL12RB2 and becomes tyrosine phosphorylated. Phosphorylated STAT4 then homodimerizes and migrates to the nucleus where it can recognize STAT target sequences present in IL12 responsive genes. Although IL12 appears to be the predominant activating signal, STAT4 can also be phosphorylated and activated in response to IFN-gamma stimulation via JAK1 and TYK2 and in response to different interleukins including IL23, IL2 and IL35. Transcription activation of IFN-gamma gene is mediated by interaction with JUN that forms a complex that efficiently interacts with the AP-1-related sequence of the IFN-gamma promoter. In response to IFN-alpha/beta signaling, acts as a transcriptional repressor and suppresses IL5 and IL13 mRNA expression during response to T-cell receptor (TCR) activation. The protein is Signal transducer and activator of transcription 4 (Stat4) of Mus musculus (Mouse).